Reading from the N-terminus, the 86-residue chain is Small ribosomal subunit protein bS20 (86 aa).

Positions 1–27 are disordered; the sequence is MANSKSAKKRAIQAEKRRQHNASRRSM.

The protein belongs to the bacterial ribosomal protein bS20 family.

In terms of biological role, binds directly to 16S ribosomal RNA. This is Small ribosomal subunit protein bS20 from Vibrio atlanticus (strain LGP32) (Vibrio splendidus (strain Mel32)).